The following is a 294-amino-acid chain: Glyceraldehyde-3-phosphate dehydrogenase (294 aa).

Residues D19, R63, and T105 each contribute to the NAD(+) site. Residues 134–136 (SCT) and T165 contribute to the D-glyceraldehyde 3-phosphate site. C135 functions as the Nucleophile in the catalytic mechanism. Positions 169-188 (KTVDGPSHKDWRGGRGASQN) are disordered. D-glyceraldehyde 3-phosphate is bound by residues 194 to 195 (TG) and R217.

The protein belongs to the glyceraldehyde-3-phosphate dehydrogenase family. In terms of assembly, homotetramer.

It localises to the cytoplasm. The enzyme catalyses D-glyceraldehyde 3-phosphate + phosphate + NAD(+) = (2R)-3-phospho-glyceroyl phosphate + NADH + H(+). Its pathway is carbohydrate degradation; glycolysis; pyruvate from D-glyceraldehyde 3-phosphate: step 1/5. Functionally, catalyzes the oxidative phosphorylation of glyceraldehyde 3-phosphate (G3P) to 1,3-bisphosphoglycerate (BPG) using the cofactor NAD. The first reaction step involves the formation of a hemiacetal intermediate between G3P and a cysteine residue, and this hemiacetal intermediate is then oxidized to a thioester, with concomitant reduction of NAD to NADH. The reduced NADH is then exchanged with the second NAD, and the thioester is attacked by a nucleophilic inorganic phosphate to produce BPG. This chain is Glyceraldehyde-3-phosphate dehydrogenase (gap), found in Citrobacter freundii.